Consider the following 424-residue polypeptide: Tyrosine--tRNA ligase (424 aa).

Tyr-36 contributes to the L-tyrosine binding site. A 'HIGH' region motif is present at residues 41 to 50 (PTAPSLHAGH). 2 residues coordinate L-tyrosine: Tyr-171 and Gln-175. The 'KMSKS' region signature appears at 231–235 (KFGKS). Lys-234 contributes to the ATP binding site. The region spanning 356-413 (DGIVDLLVASGLSASKGAARRTIHEGGVSVNNIRVDNEEWVPQSSDFLHGRWLVLRRG) is the S4 RNA-binding domain.

Belongs to the class-I aminoacyl-tRNA synthetase family. TyrS type 1 subfamily. As to quaternary structure, homodimer.

It is found in the cytoplasm. The catalysed reaction is tRNA(Tyr) + L-tyrosine + ATP = L-tyrosyl-tRNA(Tyr) + AMP + diphosphate + H(+). Its function is as follows. Catalyzes the attachment of tyrosine to tRNA(Tyr) in a two-step reaction: tyrosine is first activated by ATP to form Tyr-AMP and then transferred to the acceptor end of tRNA(Tyr). The polypeptide is Tyrosine--tRNA ligase (Mycobacterium bovis (strain ATCC BAA-935 / AF2122/97)).